The following is a 65-amino-acid chain: Large ribosomal subunit protein uL29 (65 aa).

The protein belongs to the universal ribosomal protein uL29 family.

The sequence is that of Large ribosomal subunit protein uL29 from Lactobacillus helveticus (strain DPC 4571).